We begin with the raw amino-acid sequence, 44 residues long: VFNSERPRFVIVKPRYLKGMVVNGDSWPDHFIEDANVFTKNPDK.

This Pseudotsuga menziesii (Douglas-fir) protein is Unknown protein 9.